Here is a 263-residue protein sequence, read N- to C-terminus: tRNA pseudouridine synthase A (263 aa).

Aspartate 51 functions as the Nucleophile in the catalytic mechanism. Tyrosine 109 serves as a coordination point for substrate.

This sequence belongs to the tRNA pseudouridine synthase TruA family. Homodimer.

The catalysed reaction is uridine(38/39/40) in tRNA = pseudouridine(38/39/40) in tRNA. Functionally, formation of pseudouridine at positions 38, 39 and 40 in the anticodon stem and loop of transfer RNAs. In Mannheimia succiniciproducens (strain KCTC 0769BP / MBEL55E), this protein is tRNA pseudouridine synthase A.